A 541-amino-acid polypeptide reads, in one-letter code: Chaperonin GroEL 2 (541 aa).

ATP is bound by residues 30–33 (TLGP), Lys51, 87–91 (DGTTT), Gly415, and Asp496.

It belongs to the chaperonin (HSP60) family. Forms a cylinder of 14 subunits composed of two heptameric rings stacked back-to-back. Interacts with the co-chaperonin GroES.

The protein resides in the cytoplasm. It carries out the reaction ATP + H2O + a folded polypeptide = ADP + phosphate + an unfolded polypeptide.. Functionally, together with its co-chaperonin GroES, plays an essential role in assisting protein folding. The GroEL-GroES system forms a nano-cage that allows encapsulation of the non-native substrate proteins and provides a physical environment optimized to promote and accelerate protein folding. The polypeptide is Chaperonin GroEL 2 (Gluconacetobacter diazotrophicus (strain ATCC 49037 / DSM 5601 / CCUG 37298 / CIP 103539 / LMG 7603 / PAl5)).